A 430-amino-acid polypeptide reads, in one-letter code: MAQILAPSTQWQMRITKTSPCATPITSKMWSSLVMKQTKKVAHSAKFRVMAVNSENGTINRVEDLLNLDITPFTDSIIAEYIWIGGTGIDVRSKSRTISKPVSHPSEVPKWNYDGSSTGQAPGEDSEVILYPQAIFKDPFRGGNNILVVCDAYTPAGEPIPTNKRHRAAEIFSNPKVEAEIPWYGIEQEYTLLQTNVKWPLGWPVGGYPGPQGPYYCAAGADKSFGRDISDAHYKACIYAGINISGTNGEVMPGQWEYQVGPSVGIEAGDHIWASRYILERITEQAGVVLTLDPKPIEGDWNGAGCHTNYSTKSMREDGGFEVIKKAILNLSLRHKIHIEAYGEGNERRLTGKHETASINDFSWGVANRGCSIRVGRDTEKNGKGYLEDRRPASNMDPYVVTALLAESTLLWEPTLEAEALAAQKIALKV.

A chloroplast-targeting transit peptide spans 1–49; that stretch reads MAQILAPSTQWQMRITKTSPCATPITSKMWSSLVMKQTKKVAHSAKFRV. The GS beta-grasp domain maps to 77–157; that stretch reads IIAEYIWIGG…VVCDAYTPAG (81 aa). The tract at residues 99 to 119 is disordered; sequence SKPVSHPSEVPKWNYDGSSTG. The GS catalytic domain maps to 161–430; that stretch reads PTNKRHRAAE…LAAQKIALKV (270 aa).

It belongs to the glutamine synthetase family. As to quaternary structure, homooctamer.

It is found in the plastid. It localises to the chloroplast. It catalyses the reaction L-glutamate + NH4(+) + ATP = L-glutamine + ADP + phosphate + H(+). In terms of biological role, the light-modulated chloroplast enzyme, encoded by a nuclear gene and expressed primarily in leaves, is responsible for the reassimilation of the ammonia generated by photorespiration. The sequence is that of Glutamine synthetase leaf isozyme, chloroplastic (GS2) from Pisum sativum (Garden pea).